A 301-amino-acid polypeptide reads, in one-letter code: MAPMNPPRLQRFPATASADQIFAAFKEDGCVVIEGFIPPDQVARFSQEVNPAMEKITVEVTNDGNSNDRTKRFSKCAIASPTFRNEIIESDLMHELCDRIFSNPGEGMGYHFNDTMVIEVQPGAPAQRLHRDQELYPWWNSMGPAGPECIMNFFCAVTPFTEENGATRLAPGSHLWPEFTQINERDCPQFGKIETAPAIMQPGDCYLMSGKVVHGAGHNTTTTDQRRALALSIIRRELRPVQAFSLSVPMKLAREMSERSQTMFGFRSAVQHCDGDMVHFWGNDGKDIAHHLGLEAPSVHI.

Positions 72 and 127 each coordinate substrate. Residues His130 and Asp132 each coordinate Fe cation. Thr167 provides a ligand contact to substrate. A Fe cation-binding site is contributed by His214. A substrate-binding site is contributed by Arg226.

This sequence belongs to the PhyH family. As to quaternary structure, homodimer. The cofactor is Fe cation.

It carries out the reaction preaustinoid A1 + 2-oxoglutarate + O2 = preaustinoid A2 + succinate + CO2 + H2O. It catalyses the reaction preaustinoid A2 + 2-oxoglutarate + O2 = preaustinoid A3 + succinate + CO2 + H2O. The catalysed reaction is berkeleyone A + 2-oxoglutarate + O2 = preaustinoid A + succinate + CO2 + H2O. It participates in secondary metabolite biosynthesis; terpenoid biosynthesis. Its function is as follows. Multifunctional dioxygenase; part of the gene cluster A that mediates the biosynthesis of the fungal meroterpenoid acetoxydehydroaustin. The first step of the pathway is the synthesis of 3,5-dimethylorsellinic acid by the polyketide synthase ausA. 3,5-dimethylorsellinic acid is then prenylated by the polyprenyl transferase ausN. Further epoxidation by the FAD-dependent monooxygenase ausM and cyclization by the probable terpene cyclase ausL lead to the formation of protoaustinoid A. Protoaustinoid A is then oxidized to spiro-lactone preaustinoid A3 by the combined action of the FAD-binding monooxygenases ausB and ausC, and the dioxygenase ausE. Acid-catalyzed keto-rearrangement and ring contraction of the tetraketide portion of preaustinoid A3 by ausJ lead to the formation of preaustinoid A4. The aldo-keto reductase ausK, with the help of ausH, is involved in the next step by transforming preaustinoid A4 into isoaustinone which is in turn hydroxylated by the P450 monooxygenase ausI to form austinolide. The cytochrome P450 monooxygenase ausG then modifies austinolide to austinol. Austinol is further acetylated to austin by the O-acetyltransferase ausP, which spontaneously changes to dehydroaustin. The cytochrome P450 monooxygenase then converts dehydroaustin is into 7-dehydrodehydroaustin. The hydroxylation catalyzed by ausR permits the second O-acetyltransferase ausQ to add an additional acetyl group to the molecule, leading to the formation of acetoxydehydroaustin. Due to genetic rearrangements of the clusters and the subsequent loss of some enzymes, the end product of the Penicillium brasilianum austinoid biosynthesis clusters is acetoxydehydroaustin. The sequence is that of Multifunctional dioxygenase ausE from Penicillium brasilianum.